Consider the following 198-residue polypeptide: Probable GTP-binding protein EngB (198 aa).

The 174-residue stretch at 22–195 (NIPEVALAGR…LEVIGRWVGL (174 aa)) folds into the EngB-type G domain. GTP is bound by residues 30–37 (GRSNVGKS), 57–61 (GRTRL), 75–78 (DLPG), 142–145 (TKAD), and 174–176 (FSA). Mg(2+)-binding residues include serine 37 and threonine 59.

The protein belongs to the TRAFAC class TrmE-Era-EngA-EngB-Septin-like GTPase superfamily. EngB GTPase family. Requires Mg(2+) as cofactor.

Necessary for normal cell division and for the maintenance of normal septation. This Pelotomaculum thermopropionicum (strain DSM 13744 / JCM 10971 / SI) protein is Probable GTP-binding protein EngB.